The sequence spans 159 residues: Putative viral CXC chemokine 2 (159 aa).

Intrachain disulfides connect Cys50/Cys77 and Cys52/Cys93.

This sequence belongs to the intercrine alpha (chemokine CxC) family.

The chain is Putative viral CXC chemokine 2 (UL147) from Human cytomegalovirus (strain Towne) (HHV-5).